Consider the following 95-residue polypeptide: Co-chaperonin GroES (95 aa).

It belongs to the GroES chaperonin family. Heptamer of 7 subunits arranged in a ring. Interacts with the chaperonin GroEL.

It localises to the cytoplasm. In terms of biological role, together with the chaperonin GroEL, plays an essential role in assisting protein folding. The GroEL-GroES system forms a nano-cage that allows encapsulation of the non-native substrate proteins and provides a physical environment optimized to promote and accelerate protein folding. GroES binds to the apical surface of the GroEL ring, thereby capping the opening of the GroEL channel. The chain is Co-chaperonin GroES from Rickettsia typhi (strain ATCC VR-144 / Wilmington).